Reading from the N-terminus, the 163-residue chain is Nucleotide-binding protein SYNPCC7002_A1983 (163 aa).

This sequence belongs to the YajQ family.

Its function is as follows. Nucleotide-binding protein. This is Nucleotide-binding protein SYNPCC7002_A1983 from Picosynechococcus sp. (strain ATCC 27264 / PCC 7002 / PR-6) (Agmenellum quadruplicatum).